Here is a 427-residue protein sequence, read N- to C-terminus: Trigger factor (427 aa).

The PPIase FKBP-type domain maps to 160 to 240; sequence TDTVIGDVEK…VKEVKRLELP (81 aa).

The protein belongs to the FKBP-type PPIase family. Tig subfamily.

The protein localises to the cytoplasm. The enzyme catalyses [protein]-peptidylproline (omega=180) = [protein]-peptidylproline (omega=0). Functionally, involved in protein export. Acts as a chaperone by maintaining the newly synthesized protein in an open conformation. Functions as a peptidyl-prolyl cis-trans isomerase. The polypeptide is Trigger factor (Chlorobium phaeobacteroides (strain DSM 266 / SMG 266 / 2430)).